The sequence spans 486 residues: MSSWCSSEDAHNQSSTPSTRSRKSSWLISKIDENEIDKEVQEMMDDWRRSNEAENHVECIKAALEYCRDKLKELLIDEEDTEMDGKETKTKPINIVSNTEFPEDRDVLGNLVNCLDRQQKAARQQMYFDKIVQLGLERQALQDEAVVSTSSPLDECRAEGHEFVMQPVRGGHNPCCEVCMHTIWRLVQWWRRCRVCGMRAHDKCAEEVKRVCAGVLSTRAKFELNTNLCEERSLAEQEYQCAECTAPICFDGVAEQEARLCDYSGELFCPNCHWNDVWSIPARIVHNLDSTPRPVCRAVKQLLAIIDHRPLIDINESTLSLIKFHKELRRVNELRRNFLLMKCYFVSCRTARRLRILQYLNAHSHFVDNSVMYSPKELRELCDGTLLPDLEQIHTVFRKHIEEECETCAGNGFFCELCDDINVDQKNKILYPFTENTRSCATCLAVYHKKCFERKSLNCPRCERRRKRTEIPKTLSSSDEKEAVRN.

A disordered region spans residues 1 to 26 (MSSWCSSEDAHNQSSTPSTRSRKSSW). 2 Phorbol-ester/DAG-type zinc fingers span residues 160 to 212 (GHEF…KRVC) and 393 to 459 (IHTV…SLNC).

The protein belongs to the DEF8 family.

This chain is Differentially expressed in FDCP 8 homolog, found in Caenorhabditis elegans.